Consider the following 292-residue polypeptide: 4-hydroxy-tetrahydrodipicolinate synthase (292 aa).

Thr-45 provides a ligand contact to pyruvate. The active-site Proton donor/acceptor is Tyr-133. Lys-161 acts as the Schiff-base intermediate with substrate in catalysis. Pyruvate is bound at residue Ile-203.

This sequence belongs to the DapA family. Homotetramer; dimer of dimers.

The protein localises to the cytoplasm. It catalyses the reaction L-aspartate 4-semialdehyde + pyruvate = (2S,4S)-4-hydroxy-2,3,4,5-tetrahydrodipicolinate + H2O + H(+). Its pathway is amino-acid biosynthesis; L-lysine biosynthesis via DAP pathway; (S)-tetrahydrodipicolinate from L-aspartate: step 3/4. Catalyzes the condensation of (S)-aspartate-beta-semialdehyde [(S)-ASA] and pyruvate to 4-hydroxy-tetrahydrodipicolinate (HTPA). The polypeptide is 4-hydroxy-tetrahydrodipicolinate synthase (Klebsiella pneumoniae subsp. pneumoniae (strain ATCC 700721 / MGH 78578)).